Consider the following 446-residue polypeptide: Solute carrier family 52, riboflavin transporter, member 2 (446 aa).

4 consecutive transmembrane segments (helical) span residues 14–34, 47–67, 79–99, and 104–124; these read LLVALFGMGSWAAINGIWVEL, LPSYLSVLVALGNLGLLVVTL, APIQVVQALSVVGTALLAPLW, and VMAGQVHSVAFLALTFVLALA. N129 is a glycosylation site (N-linked (GlcNAc...) asparagine). Transmembrane regions (helical) follow at residues 147–167 and 196–216; these read FFLGQGLSALLPCVLALGQGV and FFGALTALLVISAAAFQGLLL. A disordered region spans residues 228 to 267; the sequence is GSGTGLRGGAPGVEEEEEEEASPLQEPPSQAAGNTPSPDP. A compositionally biased stretch (gly residues) spans 229 to 238; that stretch reads SGTGLRGGAP. Over residues 254 to 263 the composition is skewed to polar residues; the sequence is PPSQAAGNTP. 5 consecutive transmembrane segments (helical) span residues 278–298, 313–333, 340–360, 367–387, and 405–425; these read ACLLGLLATTSALTNGVLPAV, LAVVLGSASNPLACFLAMGIL, LGGLSLLGTLFGAYLMALAIL, VGTSAGMVLVVVLWALCLGVF, and ALLAAGVAIQVGSLLGAVTMF.

The protein belongs to the riboflavin transporter family.

Its subcellular location is the cell membrane. It catalyses the reaction riboflavin(in) = riboflavin(out). Riboflavin transport is Na(+)-independent but moderately pH-sensitive. Activity is strongly inhibited by riboflavin analogs, such as lumiflavin. Weakly inhibited by flavin adenine dinucleotide (FAD) and flavin mononucleotide (FMN). In terms of biological role, plasma membrane transporter mediating the uptake by cells of the water soluble vitamin B2/riboflavin that plays a key role in biochemical oxidation-reduction reactions of the carbohydrate, lipid, and amino acid metabolism. May also act as a receptor for 4-hydroxybutyrate. (Microbial infection) In case of infection by porcine endogenous retrovirus (PERV-A), acts as a cell receptor to retroviral envelopes. The protein is Solute carrier family 52, riboflavin transporter, member 2 (SLC52A2) of Sus scrofa (Pig).